The chain runs to 609 residues: MSGWESYYKTEGDEEAEEEQEENLEASGDYKYSGRDSLIFLVDASKAMFESQSEDELTPFDMSIQCIQSVYISKIISSDRDLLAVVFYGTEKDKNSVNFKNIYVLQELDNPGAKRILELDQFKGQQGQKRFQDMMGHGSDYSLSEVLWVCANLFSDVQFKMSHKRIMLFTNEDNPHGNDSAKASRARTKAGDLRDTGIFLDLMHLKKPGGFDISLFYRDIISIAEDEDLRVHFEESSKLEDLLRKVRAKETRKRALSRLKLKLNKDIVISVGIYNLVQKALKPPPIKLYRETNEPVKTKTRTFNTSTGGLLLPSDTKRSQIYGSRQIILEKEETEELKRFDDPGLMLMGFKPLVLLKKHHYLRPSLFVYPEESLVIGSSTLFSALLIKCLEKEVAALCRYTPRRNIPPYFVALVPQEEELDDQKIQVTPPGFQLVFLPFADDKRKMPFTEKIMATPEQVGKMKAIVEKLRFTYRSDSFENPVLQQHFRNLEALALDLMEPEQAVDLTLPKVEAMNKRLGSLVDEFKELVYPPDYNPEGKVTKRKHDNEGSGSKRPKVEYSEEELKTHISKGTLGKFTVPMLKEACRAYGLKSGLKKQELLEALTKHFQD.

Residues methionine 1–glycine 28 form a disordered region. An N-acetylserine modification is found at serine 2. Serine 2 carries the phosphoserine modification. At serine 6 the chain carries Phosphoserine; by PRKDC. Residues glycine 12 to leucine 24 show a composition bias toward acidic residues. Phosphoserine is present on serine 27. Lysine 31 acts as the Schiff-base intermediate with DNA; for 5'-deoxyribose-5-phosphate lyase activity in catalysis. Lysine 31 is modified (N6-acetyllysine). Phosphoserine; by PRKDC is present on serine 51. A Ku domain is found at leucine 261 to lysine 468. The DNA-binding stretch occupies residues valine 277–aspartate 341. Lysine 287 participates in a covalent cross-link: Glycyl lysine isopeptide (Lys-Gly) (interchain with G-Cter in SUMO2). Position 306 is a phosphoserine (serine 306). N6-acetyllysine occurs at positions 317, 331, and 338. Lysine 317 is covalently cross-linked (Glycyl lysine isopeptide (Lys-Gly) (interchain with G-Cter in SUMO2)). The segment at serine 373–valine 482 is interaction with XRCC5. Threonine 455 carries the post-translational modification Phosphothreonine. Residue lysine 461 is modified to N6-acetyllysine. Serine 477 and serine 520 each carry phosphoserine. Residues proline 536 to glutamate 562 are disordered. N6-acetyllysine is present on residues lysine 539, lysine 542, and lysine 544. The residue at position 550 (serine 550) is a Phosphoserine. The interval serine 550–aspartate 609 is interaction with DEAF1. An N6-acetyllysine mark is found at lysine 553 and lysine 556. Lysine 556 participates in a covalent cross-link: Glycyl lysine isopeptide (Lys-Gly) (interchain with G-Cter in SUMO2). Serine 560 bears the Phosphoserine mark. Residue lysine 570 is modified to N6,N6,N6-trimethyllysine. The SAP domain maps to leucine 573–phenylalanine 607. The tract at residues valine 578–glutamate 583 is interaction with BAX.

It belongs to the ku70 family. Forms a heterodimer with XRCC5/Ku80; heterodimerization stabilizes XRCC5 protein. Component of the core long-range non-homologous end joining (NHEJ) complex (also named DNA-PK complex) composed of PRKDC, LIG4, XRCC4, XRCC6/Ku70, XRCC5/Ku86 and NHEJ1/XLF. Additional component of the NHEJ complex includes PAXX. Following autophosphorylation, PRKDC dissociates from DNA, leading to formation of the short-range NHEJ complex, composed of LIG4, XRCC4, XRCC6/Ku70, XRCC5/Ku86 and NHEJ1/XLF. The XRCC5-XRCC6 dimer also associates with NAA15, and this complex binds to the osteocalcin promoter and activates osteocalcin expression. In addition, XRCC6 interacts with the osteoblast-specific transcription factors MSX2, RUNX2 and DLX5. Interacts with ELF3. Interacts with ATP23. The XRCC5-XRRC6 dimer associates in a DNA-dependent manner with APEX1. Binds to CDK9 isoform 2. Identified in a complex with DEAF1 and XRCC5. Interacts with DEAF1 (via the SAND domain); the interaction is direct and may be inhibited by DNA-binding. Interacts with CLU. Interacts with NR4A3; the DNA-dependent protein kinase complex DNA-PK phosphorylates and activates NR4A3 and prevents NR4A3 ubiquitinylation and degradation. Interacts with CYREN isoform 1 (CYREN-1) and isoform 4 (CYREN-2) (via KBM motif). Interacts (via N-terminus) with HSF1 (via N-terminus); this interaction is direct and prevents XRCC5/XRCC6 heterodimeric binding and non-homologous end joining (NHEJ) repair activities induced by ionizing radiation (IR). Part of the HDP-RNP complex composed of at least HEXIM1, PRKDC, XRCC5, XRCC6, paraspeckle proteins (SFPQ, NONO, PSPC1, RBM14, and MATR3) and NEAT1 RNA. Interacts with HMBOX1. Interacts with ATF7. Interacts with APLF (via KBM motif). Interacts with WRN (via KBM motif). The XRCC5-XRCC6 dimer associates with ALKBH2. Interacts with TPRN; TPRN interacts with a number of DNA damage response proteins, is recruited to sites of DNA damage and may play a role in DNA damage repair. When not acetylated, interacts with BAX. Interacts with ERCC6L2. As to quaternary structure, (Microbial infection) Interacts with human T-cell leukemia virus 1/HTLV-1 protein HBZ. In terms of processing, phosphorylation by PRKDC may enhance helicase activity. Phosphorylation of Ser-51 does not affect DNA repair. ADP-ribosylated by PARP3. Post-translationally, methylation by SETD4 leads to accumulation in the cytoplasm and is a prerequisite for acetylation, possibly due to the change of subcellular from the nucleus to the cytosol initiated by methylation, acetylation occurring in the cytosol. In terms of processing, acetylation can be catalyzed in vitro by CREBBP/CBP and KAT2B/PCAF.

It localises to the nucleus. It is found in the chromosome. Its subcellular location is the cytoplasm. Functionally, single-stranded DNA-dependent ATP-dependent helicase that plays a key role in DNA non-homologous end joining (NHEJ) by recruiting DNA-PK to DNA. Required for double-strand break repair and V(D)J recombination. Also has a role in chromosome translocation. Has a role in chromosome translocation. The DNA helicase II complex binds preferentially to fork-like ends of double-stranded DNA in a cell cycle-dependent manner. It works in the 3'-5' direction. During NHEJ, the XRCC5-XRRC6 dimer performs the recognition step: it recognizes and binds to the broken ends of the DNA and protects them from further resection. Binding to DNA may be mediated by XRCC6. The XRCC5-XRRC6 dimer acts as a regulatory subunit of the DNA-dependent protein kinase complex DNA-PK by increasing the affinity of the catalytic subunit PRKDC to DNA by 100-fold. The XRCC5-XRRC6 dimer is probably involved in stabilizing broken DNA ends and bringing them together. The assembly of the DNA-PK complex to DNA ends is required for the NHEJ ligation step. Probably also acts as a 5'-deoxyribose-5-phosphate lyase (5'-dRP lyase), by catalyzing the beta-elimination of the 5' deoxyribose-5-phosphate at an abasic site near double-strand breaks. 5'-dRP lyase activity allows to 'clean' the termini of abasic sites, a class of nucleotide damage commonly associated with strand breaks, before such broken ends can be joined. The XRCC5-XRRC6 dimer together with APEX1 acts as a negative regulator of transcription. In association with NAA15, the XRCC5-XRRC6 dimer binds to the osteocalcin promoter and activates osteocalcin expression. Plays a role in the regulation of DNA virus-mediated innate immune response by assembling into the HDP-RNP complex, a complex that serves as a platform for IRF3 phosphorylation and subsequent innate immune response activation through the cGAS-STING pathway. Negatively regulates apoptosis by interacting with BAX and sequestering it from the mitochondria. Might have deubiquitination activity, acting on BAX. The polypeptide is X-ray repair cross-complementing protein 6 (XRCC6) (Homo sapiens (Human)).